Here is a 57-residue protein sequence, read N- to C-terminus: Conotoxin Cal6.39 (57 aa).

The N-terminal stretch at 1 to 18 (MSGTTVLLLTCLFLVTMA) is a signal peptide. 3 disulfide bridges follow: C22–C36, C29–C46, and C35–C52.

In terms of tissue distribution, expressed by the venom duct.

It localises to the secreted. Functionally, probable neurotoxin. The sequence is that of Conotoxin Cal6.39 from Californiconus californicus (California cone).